Here is a 304-residue protein sequence, read N- to C-terminus: Small ribosomal subunit protein uS3 (304 aa).

In terms of domain architecture, KH type-2 spans Met-17 to Lys-86.

It belongs to the universal ribosomal protein uS3 family. In terms of assembly, part of the 30S ribosomal subunit.

Binds the lower part of the 30S subunit head. The chain is Small ribosomal subunit protein uS3 from Methanococcoides burtonii (strain DSM 6242 / NBRC 107633 / OCM 468 / ACE-M).